Reading from the N-terminus, the 60-residue chain is Small ribosomal subunit protein uS10 (60 aa).

The protein belongs to the universal ribosomal protein uS10 family.

This is Small ribosomal subunit protein uS10 (RPS20) from Zea mays (Maize).